Reading from the N-terminus, the 100-residue chain is Aspartyl/glutamyl-tRNA(Asn/Gln) amidotransferase subunit C (100 aa).

It belongs to the GatC family. In terms of assembly, heterotrimer of A, B and C subunits.

The enzyme catalyses L-glutamyl-tRNA(Gln) + L-glutamine + ATP + H2O = L-glutaminyl-tRNA(Gln) + L-glutamate + ADP + phosphate + H(+). It carries out the reaction L-aspartyl-tRNA(Asn) + L-glutamine + ATP + H2O = L-asparaginyl-tRNA(Asn) + L-glutamate + ADP + phosphate + 2 H(+). Its function is as follows. Allows the formation of correctly charged Asn-tRNA(Asn) or Gln-tRNA(Gln) through the transamidation of misacylated Asp-tRNA(Asn) or Glu-tRNA(Gln) in organisms which lack either or both of asparaginyl-tRNA or glutaminyl-tRNA synthetases. The reaction takes place in the presence of glutamine and ATP through an activated phospho-Asp-tRNA(Asn) or phospho-Glu-tRNA(Gln). This Streptococcus pneumoniae (strain JJA) protein is Aspartyl/glutamyl-tRNA(Asn/Gln) amidotransferase subunit C.